Here is a 185-residue protein sequence, read N- to C-terminus: Large ribosomal subunit protein uL5 (185 aa).

This sequence belongs to the universal ribosomal protein uL5 family. Part of the 50S ribosomal subunit; part of the 5S rRNA/L5/L18/L25 subcomplex. Contacts the 5S rRNA and the P site tRNA. Forms a bridge to the 30S subunit in the 70S ribosome.

In terms of biological role, this is one of the proteins that bind and probably mediate the attachment of the 5S RNA into the large ribosomal subunit, where it forms part of the central protuberance. In the 70S ribosome it contacts protein S13 of the 30S subunit (bridge B1b), connecting the 2 subunits; this bridge is implicated in subunit movement. Contacts the P site tRNA; the 5S rRNA and some of its associated proteins might help stabilize positioning of ribosome-bound tRNAs. The sequence is that of Large ribosomal subunit protein uL5 from Rhizobium rhizogenes (strain K84 / ATCC BAA-868) (Agrobacterium radiobacter).